A 1370-amino-acid chain; its full sequence is DNA-directed RNA polymerase subunit beta (1370 aa).

This sequence belongs to the RNA polymerase beta chain family. As to quaternary structure, the RNAP catalytic core consists of 2 alpha, 1 beta, 1 beta' and 1 omega subunit. When a sigma factor is associated with the core the holoenzyme is formed, which can initiate transcription.

The catalysed reaction is RNA(n) + a ribonucleoside 5'-triphosphate = RNA(n+1) + diphosphate. In terms of biological role, DNA-dependent RNA polymerase catalyzes the transcription of DNA into RNA using the four ribonucleoside triphosphates as substrates. This chain is DNA-directed RNA polymerase subunit beta, found in Bordetella bronchiseptica (strain ATCC BAA-588 / NCTC 13252 / RB50) (Alcaligenes bronchisepticus).